A 440-amino-acid polypeptide reads, in one-letter code: Xaa-Pro dipeptidase (440 aa).

The Mn(2+) site is built by Asp244, Asp255, His335, Glu380, and Glu419.

The protein belongs to the peptidase M24B family. Bacterial-type prolidase subfamily. It depends on Mn(2+) as a cofactor.

The enzyme catalyses Xaa-L-Pro dipeptide + H2O = an L-alpha-amino acid + L-proline. Splits dipeptides with a prolyl residue in the C-terminal position. This is Xaa-Pro dipeptidase from Shewanella putrefaciens (strain CN-32 / ATCC BAA-453).